The sequence spans 89 residues: Small ribosomal subunit protein uS14 (89 aa).

The protein belongs to the universal ribosomal protein uS14 family. Part of the 30S ribosomal subunit. Contacts proteins S3 and S10.

Its function is as follows. Binds 16S rRNA, required for the assembly of 30S particles and may also be responsible for determining the conformation of the 16S rRNA at the A site. The protein is Small ribosomal subunit protein uS14 of Acholeplasma laidlawii (strain PG-8A).